The chain runs to 238 residues: Small proline-rich protein 3 (238 aa).

Positions 1–67 are disordered; it reads MSSYQQKQPF…CSTKVPEPGN (67 aa). Serine 2 is modified (N-acetylserine). 21 tandem repeats follow at residues 52-59, 60-67, 68-75, 76-83, 84-91, 92-99, 100-107, 108-115, 116-123, 124-131, 132-139, 140-147, 148-155, 156-163, 164-175, 176-183, 184-191, 192-199, 200-207, 208-215, and 216-223. The segment at 52–223 is 21 X 8 AA approximate tandem repeats; sequence TKIPEPCSTK…CQSRVPEVCP (172 aa). Positions 110 to 238 are disordered; it reads IPGPCSTNIP…VSAKQKTKQK (129 aa). A compositionally biased stretch (low complexity) spans 163–175; that stretch reads PSSTSEPSSEPCS.

The protein belongs to the cornifin (SPRR) family.

Its subcellular location is the cytoplasm. Its function is as follows. Cross-linked envelope protein of keratinocytes. The polypeptide is Small proline-rich protein 3 (Sprr3) (Mus musculus (Mouse)).